Here is a 482-residue protein sequence, read N- to C-terminus: Probable cytosol aminopeptidase (482 aa).

Positions 251 and 256 each coordinate Mn(2+). K263 is a catalytic residue. Residues D274, D333, and E335 each contribute to the Mn(2+) site. The active site involves R337.

Belongs to the peptidase M17 family. Mn(2+) is required as a cofactor.

It localises to the cytoplasm. The enzyme catalyses Release of an N-terminal amino acid, Xaa-|-Yaa-, in which Xaa is preferably Leu, but may be other amino acids including Pro although not Arg or Lys, and Yaa may be Pro. Amino acid amides and methyl esters are also readily hydrolyzed, but rates on arylamides are exceedingly low.. The catalysed reaction is Release of an N-terminal amino acid, preferentially leucine, but not glutamic or aspartic acids.. Presumably involved in the processing and regular turnover of intracellular proteins. Catalyzes the removal of unsubstituted N-terminal amino acids from various peptides. This chain is Probable cytosol aminopeptidase, found in Acinetobacter baumannii (strain AB307-0294).